The chain runs to 534 residues: Dual specificity calcium/calmodulin-dependent 3',5'-cyclic nucleotide phosphodiesterase 1B (534 aa).

The disordered stretch occupies residues 1–21; sequence MELSPRSPPEMLESDCPSPLE. Phosphoserine is present on residues Ser-7 and Ser-14. 2 calmodulin-binding regions span residues 27–47 and 116–139; these read SKKM…QLEN and EKPK…MFRR. The PDEase domain maps to 144–501; the sequence is VGPTYSTAVL…QKWKERAASG (358 aa). His-221 functions as the Proton donor in the catalytic mechanism. The Zn(2+) site is built by His-225, His-261, Asp-262, and Asp-368. Asp-262 is a binding site for Mg(2+). Disordered stretches follow at residues 442–473 and 494–534; these read VQPT…GDPN and WKER…GNLD. The span at 453–462 shows a compositional bias: polar residues; that stretch reads KNQPSFQWRQ. Phosphoserine is present on residues Ser-464 and Ser-512.

It belongs to the cyclic nucleotide phosphodiesterase family. PDE1 subfamily. As to quaternary structure, homodimer. The cofactor is Zn(2+). It depends on Mg(2+) as a cofactor. As to expression, expressed in central nervous system regions. Most abundant in basal ganglia. Also found in kidney papilla and adrenal medulla.

Its subcellular location is the cytoplasm. It is found in the cytosol. The catalysed reaction is a nucleoside 3',5'-cyclic phosphate + H2O = a nucleoside 5'-phosphate + H(+). It carries out the reaction 3',5'-cyclic GMP + H2O = GMP + H(+). It catalyses the reaction 3',5'-cyclic AMP + H2O = AMP + H(+). Its activity is regulated as follows. Type I PDE are activated by the binding of calmodulin in the presence of Ca(2+). Cyclic nucleotide phosphodiesterase with a dual specificity for the second messengers cAMP and cGMP, which are key regulators of many important physiological processes. Has a preference for cGMP as a substrate. This Bos taurus (Bovine) protein is Dual specificity calcium/calmodulin-dependent 3',5'-cyclic nucleotide phosphodiesterase 1B.